The primary structure comprises 302 residues: Bifunctional phosphoglucose/phosphomannose isomerase (302 aa).

The SIS domain maps to 27 to 160; that stretch reads VEGEVVRIEA…KVYGIDVKIP (134 aa). Positions 47, 48, 87, 89, 92, and 135 each coordinate D-fructose 6-phosphate. Gly47, Ser48, Ser87, Ser89, Thr92, and Arg135 together coordinate D-glucose 6-phosphate. The active-site Proton acceptor is the Glu203. Positions 219 and 298 each coordinate D-fructose 6-phosphate. Positions 219 and 298 each coordinate D-glucose 6-phosphate. The active-site Proton donor is the His219. Residue Lys298 is the Proton acceptor of the active site.

It belongs to the PGI/PMI family. In terms of assembly, homodimer.

It is found in the cytoplasm. It catalyses the reaction alpha-D-glucose 6-phosphate = beta-D-fructose 6-phosphate. The enzyme catalyses D-mannose 6-phosphate = D-fructose 6-phosphate. Inhibited by 5-phosphoarabinonate (PAB) and 6-phosphogluconate. In terms of biological role, dual specificity isomerase that catalyzes the isomerization of both glucose-6-phosphate and mannose-6-phosphate to fructose-6-phosphate with similar catalytic efficiency. In Pyrobaculum aerophilum (strain ATCC 51768 / DSM 7523 / JCM 9630 / CIP 104966 / NBRC 100827 / IM2), this protein is Bifunctional phosphoglucose/phosphomannose isomerase.